The following is a 197-amino-acid chain: MLQHIRPAFISLILFTLLFGLIYPLTVTGIAQFVFPDQASGSLIFQGDQVVGSRLIGQAFHRPEYLHPRPSIAGDGYDASASSGSNLGPLNPDLVKQVTERAAAIRVENQDQEAVIPADAVTASGSGLDPEISPAYAGLQAKRVASARAMPVVEVERIVAENTQPAFLGFIGQPRVNVLAVNLALDARFPIQRPPMP.

Residues proline 7–valine 27 traverse the membrane as a helical segment.

It belongs to the KdpC family. In terms of assembly, the system is composed of three essential subunits: KdpA, KdpB and KdpC.

The protein localises to the cell inner membrane. Functionally, part of the high-affinity ATP-driven potassium transport (or Kdp) system, which catalyzes the hydrolysis of ATP coupled with the electrogenic transport of potassium into the cytoplasm. This subunit acts as a catalytic chaperone that increases the ATP-binding affinity of the ATP-hydrolyzing subunit KdpB by the formation of a transient KdpB/KdpC/ATP ternary complex. The sequence is that of Potassium-transporting ATPase KdpC subunit from Beijerinckia indica subsp. indica (strain ATCC 9039 / DSM 1715 / NCIMB 8712).